Reading from the N-terminus, the 150-residue chain is UPF0178 protein PputW619_5044 (150 aa).

This sequence belongs to the UPF0178 family.

The polypeptide is UPF0178 protein PputW619_5044 (Pseudomonas putida (strain W619)).